The primary structure comprises 278 residues: Complement component 1 Q subcomponent-binding protein, mitochondrial (278 aa).

The transit peptide at 1 to 70 (MLPLLRCVPR…PVPCACGCGA (70 aa)) directs the protein to the mitochondrion. The segment at 73-90 (TEGDKAFVEFLTDEIKEE) is C1q binding. Residues K88 and K91 each carry the N6-acetyllysine modification. Positions 133-162 (NNSIPPTFDGEEEPSQGQKAEEQEPERTST) are disordered. Positions 165–209 (FVVEVTKTDGKKTLVLDCHYPEDEIGHEDEAESDIFSIKEVSFQA) are interaction with MAVS. Phosphotyrosine is present on Y184. 2 positions are modified to phosphoserine: S197 and S201. T210 carries the phosphothreonine modification.

Belongs to the MAM33 family. Homotrimer; three monomers form a donut-shaped structure with an unusually asymmetric charge distribution on the surface. Interacts with CDK13, HRK, VTN, NFYB, ADRA1B, FOXC1, DDX21, DDX50, NCL, SRSF1 and SRSF9. Interacts with CD93; the association may represent a cell surface C1q receptor. Interacts with KRT1; the association represents a cell surface kininogen receptor. Interacts with CD209; the interaction is indicative for a C1q:C1QBP:CD209 signaling complex. Interacts with FBL and RRP1; the respective interactions with C1QBP are competitive. Probably associates with the mitoribosome. Interacts with MAVS; the interaction occurs upon viral transfection. Interacts with PPIF. Interacts with U2AF1L4. Interacts with PLEKHN1. Interacts with VGF-derived peptide TLQP-21. Interacts with MRE11 and RAD50; forming the MRC (MRE11-RAD50-C1QBP) complex that inhibits the activity of MRE11. Ubiquitous.

The protein resides in the mitochondrion matrix. It localises to the nucleus. It is found in the cell membrane. Its subcellular location is the secreted. The protein localises to the cytoplasm. The protein resides in the nucleolus. Is believed to be a multifunctional and multicompartmental protein involved in inflammation and infection processes, ribosome biogenesis, protein synthesis in mitochondria, regulation of apoptosis, transcriptional regulation and pre-mRNA splicing. At the cell surface is thought to act as an endothelial receptor for plasma proteins of the complement and kallikrein-kinin cascades. Putative receptor for C1q; specifically binds to the globular 'heads' of C1q thus inhibiting C1; may perform the receptor function through a complex with C1qR/CD93. In complex with cytokeratin-1/KRT1 is a high affinity receptor for kininogen-1/HMWK. Can also bind other plasma proteins, such as coagulation factor XII leading to its autoactivation. May function to bind initially fluid kininogen-1 to the cell membrane. The secreted form may enhance both extrinsic and intrinsic coagulation pathways. It is postulated that the cell surface form requires docking with transmembrane proteins for downstream signaling which might be specific for a cell-type or response. By acting as C1q receptor is involved in chemotaxis of immature dendritic cells and neutrophils and is proposed to signal through CD209/DC-SIGN on immature dendritic cells, through integrin alpha-4/beta-1 during trophoblast invasion of the decidua, and through integrin beta-1 during endothelial cell adhesion and spreading. Signaling involved in inhibition of innate immune response is implicating the PI3K-AKT/PKB pathway. Required for protein synthesis in mitochondria. In mitochondrial translation may be involved in formation of functional 55S mitoribosomes; the function seems to involve its RNA-binding activity. Acts as a RNA modification reader, which specifically recognizes and binds mitochondrial RNAs modified by C5-methylcytosine (m5C) in response to stress, and promotes recruitment of the mitochondrial degradosome complex, leading to their degradation. May be involved in the nucleolar ribosome maturation process; the function may involve the exchange of FBL for RRP1 in the association with pre-ribosome particles. Involved in regulation of RNA splicing by inhibiting the RNA-binding capacity of SRSF1 and its phosphorylation. Is required for the nuclear translocation of splicing factor U2AF1L4. Involved in regulation of CDKN2A- and HRK-mediated apoptosis. May be involved in regulation of FOXC1 transcriptional activity and NFY/CCAAT-binding factor complex-mediated transcription. May play a role in antibacterial defense. Acts as a regulator of DNA repair via homologous recombination by inhibiting the activity of MRE11: interacts with unphosphorylated MRE11 and RAD50 in absence of DNA damage, preventing formation and activity of the MRN complex. Following DNA damage, dissociates from phosphorylated MRE11, allowing formation of the MRN complex. This is Complement component 1 Q subcomponent-binding protein, mitochondrial (C1qbp) from Mus musculus (Mouse).